The sequence spans 513 residues: ATP synthase subunit alpha (513 aa).

169-176 (GDRQCGKT) is an ATP binding site.

This sequence belongs to the ATPase alpha/beta chains family. In terms of assembly, F-type ATPases have 2 components, CF(1) - the catalytic core - and CF(0) - the membrane proton channel. CF(1) has five subunits: alpha(3), beta(3), gamma(1), delta(1), epsilon(1). CF(0) has three main subunits: a(1), b(2) and c(9-12). The alpha and beta chains form an alternating ring which encloses part of the gamma chain. CF(1) is attached to CF(0) by a central stalk formed by the gamma and epsilon chains, while a peripheral stalk is formed by the delta and b chains.

The protein localises to the cell inner membrane. The enzyme catalyses ATP + H2O + 4 H(+)(in) = ADP + phosphate + 5 H(+)(out). In terms of biological role, produces ATP from ADP in the presence of a proton gradient across the membrane. The alpha chain is a regulatory subunit. This chain is ATP synthase subunit alpha, found in Burkholderia orbicola (strain AU 1054).